The sequence spans 192 residues: Erythropoietin (192 aa).

Residues 1–27 (MGVHECPAWLWLLLSLVSLPLGLPVPG) form the signal peptide. 2 disulfides stabilise this stretch: Cys-34–Cys-187 and Cys-56–Cys-60. N-linked (GlcNAc...) asparagine glycosylation occurs at Asn-51. N-linked (GlcNAc...) asparagine glycosylation is found at Asn-65 and Asn-110. Ser-152 carries O-linked (GalNAc...) serine glycosylation.

The protein belongs to the EPO/TPO family. In terms of tissue distribution, produced by kidney or liver of adult mammals and by liver of fetal or neonatal mammals.

The protein localises to the secreted. Functionally, hormone involved in the regulation of erythrocyte proliferation and differentiation and the maintenance of a physiological level of circulating erythrocyte mass. Binds to EPOR leading to EPOR dimerization and JAK2 activation thereby activating specific downstream effectors, including STAT1 and STAT3. The polypeptide is Erythropoietin (EPO) (Macaca mulatta (Rhesus macaque)).